A 724-amino-acid chain; its full sequence is NAD(+) hydrolase SARM1 (724 aa).

A mitochondrion-targeting transit peptide spans 1–27; sequence MVLTLLFSAYKLCRFFTMSGPRPGADR. The interval 24-56 is disordered; the sequence is GADRLTVPGPDRSGGASPWWAAGGRGSREVSPG. Low complexity predominate over residues 36-45; that stretch reads SGGASPWWAA. An ARM 1 repeat occupies 60–100; it reads EVQGALERSLPELQQALSELKQASAARAVGAGLAEVFQLVE. NAD(+)-binding positions include Trp103, Arg110, 149–157, and 190–193; these read EQILVAENR and HMFK. ARM repeat units follow at residues 114-153, 155-193, 196-235, 237-280, 281-314, 315-354, and 359-402; these read QGLC…QILV, ENRD…HMFK, EETC…NCAL, GGQT…LATN, KEVE…CLVD, ASDT…AEAA, and QGKT…EEVP. SAM domains lie at 412–476 and 486–548; these read WKEA…LKTF and NLAD…MLHS. Phosphoserine is present on residues Ser548 and Ser558. The 144-residue stretch at 560–703 folds into the TIR domain; sequence DTPDVFISYR…KIIRFLQGRP (144 aa). Residues 569–570 and Glu599 each bind NAD(+); that span reads RR. The active site involves Glu642. A compositionally biased stretch (polar residues) spans 703 to 716; the sequence is PSQDSSAGSDTSLE. The segment at 703–724 is disordered; the sequence is PSQDSSAGSDTSLEGATPMGLP.

Belongs to the SARM1 family. In terms of assembly, homooctamer; forms an octameric ring via SAM domains. Interacts with TICAM1/TRIF and thereby interferes with TICAM1/TRIF function. Interacts with SDC2 (via cytoplasmic domain) and MAPK10/JNK3. In terms of processing, phosphorylation at Ser-548 by JNK kinases (MAPK8, MAPK9 and /or MAPK10) enhance the NAD(+) hydrolase (NADase) activity. Phosphorylation at Ser-548 and subsequent activation takes place in response to oxidative stress conditions and inhibits mitochondrial respiration. Widely expressed in the brain and neurons (at protein level). Expressed in photoreceptor cells of the neural retina.

It localises to the cytoplasm. The protein resides in the cell projection. It is found in the axon. The protein localises to the dendrite. Its subcellular location is the synapse. It localises to the mitochondrion. It carries out the reaction NAD(+) + H2O = ADP-D-ribose + nicotinamide + H(+). It catalyses the reaction NAD(+) = cyclic ADP-beta-D-ribose + nicotinamide + H(+). The catalysed reaction is NADP(+) + H2O = ADP-D-ribose 2'-phosphate + nicotinamide + H(+). Its activity is regulated as follows. Autoinhibited: in the inactive state, the enzymatic TIR domain is held apart by the autoinhibiting ARM repeats. NAD(+)-binding to ARM repeats maintains an inactive state by promoting interaction between ARM repeats and the TIR domain, thereby facilitating inhibition of the enzymatic TIR domain. Following activation, possibly by nicotinamide mononucleotide (NMN), auto-inhibitory interactions are released, allowing self-association of the TIR domains and subsequent activation of the NAD(+) hydrolase (NADase) activity. Self-association of TIR domains is facilitated by the octamer of SAM domains. Its function is as follows. NAD(+) hydrolase, which plays a key role in axonal degeneration following injury by regulating NAD(+) metabolism. Acts as a negative regulator of MYD88- and TRIF-dependent toll-like receptor signaling pathway by promoting Wallerian degeneration, an injury-induced form of programmed subcellular death which involves degeneration of an axon distal to the injury site. Wallerian degeneration is triggered by NAD(+) depletion: in response to injury, SARM1 is activated and catalyzes cleavage of NAD(+) into ADP-D-ribose (ADPR), cyclic ADPR (cADPR) and nicotinamide; NAD(+) cleavage promoting cytoskeletal degradation and axon destruction. Also able to hydrolyze NADP(+), but not other NAD(+)-related molecules. Can activate neuronal cell death in response to stress. Regulates dendritic arborization through the MAPK4-JNK pathway. Involved in innate immune response: inhibits both TICAM1/TRIF- and MYD88-dependent activation of JUN/AP-1, TRIF-dependent activation of NF-kappa-B and IRF3, and the phosphorylation of MAPK14/p38. This chain is NAD(+) hydrolase SARM1, found in Mus musculus (Mouse).